A 478-amino-acid chain; its full sequence is Endoplasmic reticulum oxidoreductin-1 (478 aa).

The signal sequence occupies residues 1 to 20; the sequence is MREPLLQLIVLSLIIIVVNT. 6 cysteine pairs are disulfide-bonded: cysteine 28-cysteine 41, cysteine 30-cysteine 39, cysteine 79-cysteine 384, cysteine 88-cysteine 93, cysteine 209-cysteine 230, and cysteine 387-cysteine 390. The disordered stretch occupies residues 117–143; that stretch reads AAVKEEEDDDAEKCADAGNNIDPMDRT. Arginine 188, threonine 190, and tryptophan 201 together coordinate FAD. FAD-binding residues include serine 241, histidine 244, arginine 283, and arginine 295. A glycan (N-linked (GlcNAc...) asparagine) is linked at asparagine 377. The tract at residues 459-478 is disordered; that stretch reads ESVMNTAADGPPRKSNKIDL.

It belongs to the EROs family. In terms of assembly, may function both as a monomer and a homodimer. FAD is required as a cofactor.

It is found in the endoplasmic reticulum membrane. Oxidoreductase involved in disulfide bond formation in the endoplasmic reticulum. Efficiently reoxidizes pdi-1, the enzyme catalyzing protein disulfide formation, in order to allow pdi-1 to sustain additional rounds of disulfide formation. Following pdi reoxidation, passes its electrons to molecular oxygen via FAD, leading to the production of reactive oxygen species (ROS) in the cell. The chain is Endoplasmic reticulum oxidoreductin-1 (ero-1) from Caenorhabditis elegans.